Reading from the N-terminus, the 323-residue chain is Ankyrin repeat and SOCS box protein 11 (323 aa).

6 ANK repeats span residues 64–93 (ADRS…NVNL), 97–126 (NRVS…HVNG), 130–159 (HGAT…KAQL), 162–191 (HLAS…NIDQ), 195–224 (HLGT…NVNH), and 227–256 (WLDT…NLKC). Positions 273 to 323 (SVEQALLLREGPPALSQLCRLCVRKCLGRNCHKTIHKLYLPDPLEKFLLYQ) constitute an SOCS box domain.

The protein belongs to the ankyrin SOCS box (ASB) family. In terms of assembly, substrate-recognition component of the ECS(ASB11) complex, composed of ASB11, CUL5, ELOB, ELOC and RNF7/RBX2.

The protein resides in the endoplasmic reticulum. It participates in protein modification; protein ubiquitination. Substrate-recognition component of a cullin-5-RING E3 ubiquitin-protein ligase complex (ECS complex, also named CRL5 complex), which mediates the ubiquitination and subsequent proteasomal degradation of target proteins, such as BIK, DIRAS2 and RPN1. The ECS(ASB11) complex acts as a regulator of the endoplasmic reticulum unfolded protein response by mediating ubiquitination and degradation of BIK. This chain is Ankyrin repeat and SOCS box protein 11 (ASB11), found in Bos taurus (Bovine).